The chain runs to 31 residues: Phospholipase A2 homolog P-elapitoxin-Aa1a beta chain (31 aa).

The protein belongs to the phospholipase A2 family. Group I subfamily. As to quaternary structure, heterotrimer of alpha, beta and gamma chains, each related to PLA2. In terms of tissue distribution, expressed by the venom gland.

The protein resides in the secreted. In terms of biological role, heterotrimer: Snake venom phospholipase A2 (PLA2) that has presynaptic neurotoxicity. Inhibits nerve-evoked twitch contractions but not responses to cholinergic agonists acetylcholine and carbachol and to depolarizing agonist KCl. Causes a fade in tetanic contractions. Displays a triphasic mode of action with depression, enhancement and blockade of neurotransmission. Does not display myotoxic activity such as changes in baseline muscle tension or inhibition of directly stimulated muscle twitches. All subunits are necessary for maximum toxicity. Its function is as follows. Monomer: The beta chain has no enzymatic activity and is not toxic by itself. The sequence is that of Phospholipase A2 homolog P-elapitoxin-Aa1a beta chain from Acanthophis antarcticus (Common death adder).